The primary structure comprises 225 residues: Uridine kinase (225 aa).

ATP is bound at residue 12–19 (GGTGAGKT).

Belongs to the uridine kinase family.

The protein resides in the cytoplasm. It carries out the reaction uridine + ATP = UMP + ADP + H(+). It catalyses the reaction cytidine + ATP = CMP + ADP + H(+). It functions in the pathway pyrimidine metabolism; CTP biosynthesis via salvage pathway; CTP from cytidine: step 1/3. The protein operates within pyrimidine metabolism; UMP biosynthesis via salvage pathway; UMP from uridine: step 1/1. The protein is Uridine kinase of Halobacterium salinarum (strain ATCC 700922 / JCM 11081 / NRC-1) (Halobacterium halobium).